The primary structure comprises 71 residues: Sec-independent protein translocase protein TatA (71 aa).

The helical transmembrane segment at 1–21 threads the bilayer; that stretch reads MGASPVQLLIVLFIAVLVFGG.

The protein belongs to the TatA/E family. The Tat system comprises two distinct complexes: a TatABC complex, containing multiple copies of TatA, TatB and TatC subunits, and a separate TatA complex, containing only TatA subunits. Substrates initially bind to the TatABC complex, which probably triggers association of the separate TatA complex to form the active translocon.

Its subcellular location is the cell inner membrane. Functionally, part of the twin-arginine translocation (Tat) system that transports large folded proteins containing a characteristic twin-arginine motif in their signal peptide across membranes. TatA could form the protein-conducting channel of the Tat system. The sequence is that of Sec-independent protein translocase protein TatA from Dichelobacter nodosus (strain VCS1703A).